Here is a 268-residue protein sequence, read N- to C-terminus: Undecaprenyl-diphosphatase (268 aa).

The next 7 membrane-spanning stretches (helical) occupy residues 47–67 (FAVLIQLGAILAILALYFVKL), 83–103 (FVIGVLVAFLPAAVIGAAFGG), 109–129 (LFNPWVVCFSLIVGGAILLWV), 144–164 (FPLLTYFYIGCAQCTAMIPGV), 184–204 (AAEFSFFLAIPTMLGAFVYDL), 217–237 (IIVAIGFVVSFITAIIVVKTF), and 248–268 (LFAWWRVIVGTLGLIALALGL).

This sequence belongs to the UppP family.

It localises to the cell inner membrane. The catalysed reaction is di-trans,octa-cis-undecaprenyl diphosphate + H2O = di-trans,octa-cis-undecaprenyl phosphate + phosphate + H(+). Functionally, catalyzes the dephosphorylation of undecaprenyl diphosphate (UPP). Confers resistance to bacitracin. The chain is Undecaprenyl-diphosphatase from Rhodopseudomonas palustris (strain ATCC BAA-98 / CGA009).